A 445-amino-acid chain; its full sequence is Mannan endo-1,4-beta-mannosidase 2 (445 aa).

The N-terminal stretch at 1–27 (MAVGNGLILYHILGLASCIALVYFSLG) is a signal peptide. Trp110 serves as a coordination point for substrate. A glycan (N-linked (GlcNAc...) asparagine) is linked at Asn181. Substrate is bound at residue Asn226. Glu227 acts as the Proton donor in catalysis. A substrate-binding site is contributed by Tyr309. Glu349 (nucleophile) is an active-site residue. Residue Trp391 participates in substrate binding.

This sequence belongs to the glycosyl hydrolase 5 (cellulase A) family. In terms of tissue distribution, expressed in stems and seeds, and at lower levels in roots and leaves.

It is found in the secreted. It catalyses the reaction Random hydrolysis of (1-&gt;4)-beta-D-mannosidic linkages in mannans, galactomannans and glucomannans.. This Oryza sativa subsp. japonica (Rice) protein is Mannan endo-1,4-beta-mannosidase 2 (MAN2).